Reading from the N-terminus, the 173-residue chain is Transcription factor HES-2 (173 aa).

The bHLH domain occupies 13-70 (LRKSLKPLLEKRRRARINQSLSQLKGLILPLLGRENSNCSKLEKADVLEMTVRFLQEL). The Orange domain occupies 86 to 119 (YREGYSACVARLARVLPACRVLEPAVSARLLEHL). The disordered stretch occupies residues 128-173 (LDGGRAGDSSGPSAPAPAPASAPEPASAPVPSPPSPPCGPGLWRPW). The segment covering 141–166 (APAPAPASAPEPASAPVPSPPSPPCG) has biased composition (pro residues). The WRPW motif motif lies at 170 to 173 (WRPW).

Transcription repression requires formation of a complex with a corepressor protein of the Groucho/TLE family. In terms of tissue distribution, expressed in placenta, pancreatic cancer, colon cancer with RER, cervical cancer, and in head and neck tumors.

It is found in the nucleus. Its function is as follows. Transcriptional repressor of genes that require a bHLH protein for their transcription. This is Transcription factor HES-2 (HES2) from Homo sapiens (Human).